A 692-amino-acid chain; its full sequence is Elongation factor G (692 aa).

A tr-type G domain is found at 8-283 (DHVRNIGIMA…AVVDYFPSPS (276 aa)). Residues 17 to 24 (AHIDAGKT), 81 to 85 (DTPGH), and 135 to 138 (NKMD) each bind GTP.

Belongs to the TRAFAC class translation factor GTPase superfamily. Classic translation factor GTPase family. EF-G/EF-2 subfamily.

Its subcellular location is the cytoplasm. Functionally, catalyzes the GTP-dependent ribosomal translocation step during translation elongation. During this step, the ribosome changes from the pre-translocational (PRE) to the post-translocational (POST) state as the newly formed A-site-bound peptidyl-tRNA and P-site-bound deacylated tRNA move to the P and E sites, respectively. Catalyzes the coordinated movement of the two tRNA molecules, the mRNA and conformational changes in the ribosome. The sequence is that of Elongation factor G from Magnetococcus marinus (strain ATCC BAA-1437 / JCM 17883 / MC-1).